A 595-amino-acid polypeptide reads, in one-letter code: Actin-histidine N-methyltransferase (595 aa).

The segment at 1–22 (MGKKSRVKTQKSGTGATATVSP) is disordered. Positions 10–20 (QKSGTGATATV) are enriched in polar residues. Residues R75, 104–106 (EGF), R254, 275–279 (DMCNH), and 325–327 (SGF) each bind S-adenosyl-L-methionine. Residues 94–314 (EGFEMVNFKE…AGEQIYIFYG (221 aa)) enclose the SET domain. Residue S513 is modified to Phosphoserine. Positions 552–595 (LVNGENCIPNGTRSENEDLNQEENKRAVEDAKGSSSDSTDAVKK) are disordered. The span at 573–583 (EENKRAVEDAK) shows a compositional bias: basic and acidic residues. The span at 584–595 (GSSSDSTDAVKK) shows a compositional bias: polar residues.

Belongs to the class V-like SAM-binding methyltransferase superfamily. SETD3 actin-histidine methyltransferase family. In terms of assembly, interacts with MYOD1. Post-translationally, phosphorylated by GSK3B, which is required for recognition by the SCF(FBXW7) complex and subsequent degradation. In terms of processing, ubiquitinated by the SCF(FBXW7) complex following phosphorylation by GSK3B, leading to its degradation by the proteasome.

Its subcellular location is the cytoplasm. It localises to the nucleus. The catalysed reaction is L-histidyl-[protein] + S-adenosyl-L-methionine = N(tele)-methyl-L-histidyl-[protein] + S-adenosyl-L-homocysteine + H(+). In terms of biological role, protein-histidine N-methyltransferase that specifically mediates 3-methylhistidine (tele-methylhistidine) methylation of actin at 'His-73'. Histidine methylation of actin is required for smooth muscle contraction of the laboring uterus during delivery. Does not have protein-lysine N-methyltransferase activity and probably only catalyzes histidine methylation of actin. This Otolemur garnettii (Small-eared galago) protein is Actin-histidine N-methyltransferase.